We begin with the raw amino-acid sequence, 358 residues long: N-acylethanolamine-hydrolyzing acid amidase (358 aa).

A signal peptide spans 1–26; that stretch reads MQGTGHPVRPVLELLLLLLLLAGVGG. N-linked (GlcNAc...) asparagine glycosylation is found at Asn-39 and Asn-108. The active-site Nucleophile is Cys-127. N-linked (GlcNAc...) asparagine glycosylation is found at Asn-310, Asn-334, and Asn-356.

The protein belongs to the acid ceramidase family. As to quaternary structure, heterodimer of an alpha and a beta subunit, produced by autocatalytic cleavage. N-glycosylated. Tunicamycin treatment causes a reduction in specific activity against N-palmitoylethanolamine. Post-translationally, autoproteolytic cleavage at pH 4.5 gives rise to the alpha and beta subunit. Cleavage gives rise to a conformation change that activates the enzyme. The same catalytic Cys residue mediates the autoproteolytic cleavage and subsequent hydrolysis of lipid substrates.

It is found in the lysosome. The protein resides in the membrane. The enzyme catalyses N-hexadecanoylethanolamine + H2O = ethanolamine + hexadecanoate. It catalyses the reaction an N-(long-chain fatty acyl)ethanolamine + H2O = a long-chain fatty acid + ethanolamine. It carries out the reaction N-dodecanoylethanolamine + H2O = dodecanoate + ethanolamine. The catalysed reaction is N-tetradecanoylethanolamine + H2O = tetradecanoate + ethanolamine. The enzyme catalyses an N-acylsphing-4-enine + H2O = sphing-4-enine + a fatty acid. It catalyses the reaction N-hexadecanoylsphing-4-enine + H2O = sphing-4-enine + hexadecanoate. It carries out the reaction N-dodecanoylsphing-4-enine + H2O = dodecanoate + sphing-4-enine. The protein operates within lipid metabolism; fatty acid metabolism. Its function is as follows. Degrades bioactive fatty acid amides to their corresponding acids, with the following preference: N-palmitoylethanolamine &gt; N-myristoylethanolamine &gt; N-stearoylethanolamine &gt; N-oleoylethanolamine &gt; N-linoleoylethanolamine &gt; N-arachidonoylethanolamine. This chain is N-acylethanolamine-hydrolyzing acid amidase, found in Oryctolagus cuniculus (Rabbit).